The sequence spans 261 residues: Putative outer membrane protein CT_371 (261 aa).

Residues Met1 to Ala18 form the signal peptide.

It localises to the cell outer membrane. The sequence is that of Putative outer membrane protein CT_371 from Chlamydia trachomatis serovar D (strain ATCC VR-885 / DSM 19411 / UW-3/Cx).